Here is a 536-residue protein sequence, read N- to C-terminus: Bifunctional purine biosynthesis protein PurH (536 aa).

One can recognise an MGS-like domain in the interval 8 to 158; the sequence is IPAPDEVRIQ…KNHAYVTIVT (151 aa).

This sequence belongs to the PurH family.

It catalyses the reaction (6R)-10-formyltetrahydrofolate + 5-amino-1-(5-phospho-beta-D-ribosyl)imidazole-4-carboxamide = 5-formamido-1-(5-phospho-D-ribosyl)imidazole-4-carboxamide + (6S)-5,6,7,8-tetrahydrofolate. The enzyme catalyses IMP + H2O = 5-formamido-1-(5-phospho-D-ribosyl)imidazole-4-carboxamide. Its pathway is purine metabolism; IMP biosynthesis via de novo pathway; 5-formamido-1-(5-phospho-D-ribosyl)imidazole-4-carboxamide from 5-amino-1-(5-phospho-D-ribosyl)imidazole-4-carboxamide (10-formyl THF route): step 1/1. It participates in purine metabolism; IMP biosynthesis via de novo pathway; IMP from 5-formamido-1-(5-phospho-D-ribosyl)imidazole-4-carboxamide: step 1/1. This chain is Bifunctional purine biosynthesis protein PurH, found in Sinorhizobium fredii (strain NBRC 101917 / NGR234).